The sequence spans 150 residues: UPF0756 membrane protein HD_1071 (150 aa).

The next 4 helical transmembrane spans lie at 1–21, 52–72, 82–102, and 114–134; these read MSLQFNPIGLFLVALILLGVL, YGLTIGIIILTIGVLSPIVSG, ILSWKMALAISIGIFVAWLGG, and IITGLLIGTIIGIAFFGGIPV.

The protein belongs to the UPF0756 family.

The protein resides in the cell membrane. This chain is UPF0756 membrane protein HD_1071, found in Haemophilus ducreyi (strain 35000HP / ATCC 700724).